A 295-amino-acid chain; its full sequence is Caffeine dehydrogenase subunit beta (295 aa).

Positions 1–178 (MKPTAFDYIR…CEIRIPVPSQ (178 aa)) constitute an FAD-binding PCMH-type domain. FAD-binding positions include 32–36 (AGGQS) and 111–115 (TLGGN).

Heterotrimer composed of an alpha (CdhA), a beta (CdhB) and a gamma (CdhC) subunit.

The enzyme catalyses caffeine + a ubiquinone + H2O = 1,3,7-trimethylurate + a ubiquinol. It carries out the reaction ubiquinone-0 + caffeine + H2O = ubiquinol-0 + 1,3,7-trimethylurate. It catalyses the reaction theobromine + a ubiquinone + H2O = 3,7-dimethylurate + a ubiquinol. Its function is as follows. Component of the caffeine dehydrogenase complex that catalyzes the hydrolytical oxidation of 1,3,7-trimethylxanthine (caffeine) by incorporation of an oxygen atom originating from a water molecule into position C-8 to produce 1,3,7-trimethyluric acid (TMU). Coenzyme Q0 (ubiquinone-0) is the preferred electron acceptor and, to a lesser extent, coenzyme Q2 (ubiquinone-2) can also be used, but oxygen and NAD(P)(+) cannot. Is involved in a caffeine degradation pathway that allows Pseudomonas sp. strain CBB1 to grow on caffeine as the sole carbon and nitrogen source. Is also active with theobromine as substrate, but shows a very poor activity with theophylline and is not active with xanthine, 3-methylxanthine, 7-methylxanthine, TMU, and 3,7-dimethylurate. The sequence is that of Caffeine dehydrogenase subunit beta from Pseudomonas sp. (strain CBB1).